Consider the following 267-residue polypeptide: Proteasome subunit alpha (267 aa).

The segment at 231 to 267 is disordered; that stretch reads ETLLQERDSKESAESEEPKESEEGKKTGKKSDADSSD. A compositionally biased stretch (basic and acidic residues) spans 234–267; that stretch reads LQERDSKESAESEEPKESEEGKKTGKKSDADSSD.

Belongs to the peptidase T1A family. In terms of assembly, the 20S proteasome core is composed of 14 alpha and 14 beta subunits that assemble into four stacked heptameric rings, resulting in a barrel-shaped structure. The two inner rings, each composed of seven catalytic beta subunits, are sandwiched by two outer rings, each composed of seven alpha subunits. The catalytic chamber with the active sites is on the inside of the barrel. Has a gated structure, the ends of the cylinder being occluded by the N-termini of the alpha-subunits. Is capped by the proteasome-associated ATPase, ARC.

The protein resides in the cytoplasm. Its pathway is protein degradation; proteasomal Pup-dependent pathway. With respect to regulation, the formation of the proteasomal ATPase ARC-20S proteasome complex, likely via the docking of the C-termini of ARC into the intersubunit pockets in the alpha-rings, may trigger opening of the gate for substrate entry. Interconversion between the open-gate and close-gate conformations leads to a dynamic regulation of the 20S proteasome proteolysis activity. Functionally, component of the proteasome core, a large protease complex with broad specificity involved in protein degradation. This chain is Proteasome subunit alpha, found in Mycobacterium marinum (strain ATCC BAA-535 / M).